Consider the following 689-residue polypeptide: Beta-adrenergic receptor kinase 1 (689 aa).

Residues 1-190 (MADLEAVLAD…ELNIHLTMND (190 aa)) are N-terminal. An RGS domain is found at 54–175 (TFEKIFSQKL…IESDKFTRFC (122 aa)). The region spanning 191–453 (FSVHRIIGRG…AQEIKESPFF (263 aa)) is the Protein kinase domain. Residues 197-205 (IGRGGFGEV) and Lys-220 each bind ATP. Asp-317 acts as the Proton acceptor in catalysis. The AGC-kinase C-terminal domain maps to 454-521 (RSLDWQMVFL…TISERWQQEV (68 aa)). In terms of domain architecture, PH spans 558-652 (DCIMHGYMSK…WKKELRDAYR (95 aa)). The residue at position 670 (Ser-670) is a Phosphoserine.

It belongs to the protein kinase superfamily. AGC Ser/Thr protein kinase family. GPRK subfamily. In terms of assembly, interacts with the heterodimer formed by GNB1 and GNG2. Interacts with GIT1. Interacts with, and phosphorylates chemokine-stimulated CCR5. Interacts with ARRB1. Interacts with LPAR1 and LPAR2. Interacts with RALA in response to LPAR1 activation. ADRBK1 and RALA mutually inhibit each other's binding to LPAR1. Interacts with ADRB2. In terms of tissue distribution, expressed at low levels in brain cortex, hippocampus, striatum, hypothalamus, cerebellum and brainstem (at protein level).

It is found in the cytoplasm. The protein localises to the cell membrane. Its subcellular location is the postsynapse. It localises to the presynapse. It catalyses the reaction [beta-adrenergic receptor] + ATP = [beta-adrenergic receptor]-phosphate + ADP + H(+). In contrast to other AGC family kinases, the catalytic activity is solely regulated by the binding of substrates and ligands, not by phosphorylation of the kinase domain. In terms of biological role, specifically phosphorylates the agonist-occupied form of the beta-adrenergic and closely related receptors, probably inducing a desensitization of them. Key regulator of LPAR1 signaling. Competes with RALA for binding to LPAR1 thus affecting the signaling properties of the receptor. Desensitizes LPAR1 and LPAR2 in a phosphorylation-independent manner. Positively regulates ciliary smoothened (SMO)-dependent Hedgehog (Hh) signaling pathway by facilitating the trafficking of SMO into the cilium and the stimulation of SMO activity. Inhibits relaxation of airway smooth muscle in response to blue light. This is Beta-adrenergic receptor kinase 1 from Rattus norvegicus (Rat).